Here is a 425-residue protein sequence, read N- to C-terminus: MDTSAIQQTLVKIYQRQAWQPPRKASKNETTVGKPRELAGGGSPADGGFRPSRVVVVAKTTRYEFEQQRYRYAELSEEDLKQLLALKGSSYSGLLERHHIHTKNVEHIIDSLRDEGIEVRLVKRREYDEETVRWADAVIAAGGDGTMLLAASKVLDRLKPVIGVNTDPERSEGHLCLPVRYTHSFPEALQKFSRGEFRWLWRQRIRLYLEGTGINPSPVDLHEQQLSLNQHSRAFNIERVDDERSEASGPQLLPVRALNEVFIGESLSSRASYYEISVDDGPWEKQKSSGLNLCTGTGSKAWSFNINRVAAQAVEDVLNIARRQGNLTLPLNKELVEKVTNEYNESLLYSPEEPKILFSIREPIANRVFSSSRQRCFSSKVCVRSRCWDACMVVDGGTSFEFNDGAIASMMINKEDELRTVILEQ.

The transit peptide at 1-45 directs the protein to the mitochondrion; the sequence is MDTSAIQQTLVKIYQRQAWQPPRKASKNETTVGKPRELAGGGSPA. A disordered region spans residues 20–46; sequence QPPRKASKNETTVGKPRELAGGGSPAD. Lys59 is subject to N6-acetyllysine; alternate. Position 59 is an N6-succinyllysine; alternate (Lys59). Ser171 bears the Phosphoserine mark. At Lys285 the chain carries N6-succinyllysine. Lys300 bears the N6-acetyllysine; alternate mark. Lys300 is modified (N6-succinyllysine; alternate). At Ser350 the chain carries Phosphoserine. Lys380 carries the post-translational modification N6-acetyllysine.

It belongs to the NAD kinase family. As to quaternary structure, homodimer.

The protein localises to the mitochondrion. The catalysed reaction is NAD(+) + ATP = ADP + NADP(+) + H(+). Its activity is regulated as follows. Inhibited by NADH, NADPH and NADP(+). Its function is as follows. Mitochondrial NAD(+) kinase that phosphorylates NAD(+) to yield NADP(+). Can use both ATP or inorganic polyphosphate as the phosphoryl donor. The polypeptide is NAD kinase 2, mitochondrial (Nadk2) (Rattus norvegicus (Rat)).